We begin with the raw amino-acid sequence, 333 residues long: Ribosomal RNA small subunit methyltransferase C (333 aa).

Belongs to the methyltransferase superfamily. RsmC family. Monomer.

The protein localises to the cytoplasm. The catalysed reaction is guanosine(1207) in 16S rRNA + S-adenosyl-L-methionine = N(2)-methylguanosine(1207) in 16S rRNA + S-adenosyl-L-homocysteine + H(+). Specifically methylates the guanine in position 1207 of 16S rRNA in the 30S particle. This chain is Ribosomal RNA small subunit methyltransferase C, found in Mannheimia succiniciproducens (strain KCTC 0769BP / MBEL55E).